We begin with the raw amino-acid sequence, 448 residues long: Glucose-6-phosphate isomerase (448 aa).

The Proton donor role is filled by Glu290. Active-site residues include His311 and Lys425.

This sequence belongs to the GPI family.

It is found in the cytoplasm. It catalyses the reaction alpha-D-glucose 6-phosphate = beta-D-fructose 6-phosphate. The protein operates within carbohydrate biosynthesis; gluconeogenesis. It participates in carbohydrate degradation; glycolysis; D-glyceraldehyde 3-phosphate and glycerone phosphate from D-glucose: step 2/4. Catalyzes the reversible isomerization of glucose-6-phosphate to fructose-6-phosphate. The chain is Glucose-6-phosphate isomerase from Lactococcus lactis subsp. lactis (strain IL1403) (Streptococcus lactis).